The chain runs to 165 residues: 2-C-methyl-D-erythritol 2,4-cyclodiphosphate synthase (165 aa).

A divalent metal cation is bound by residues D11 and H13. 4-CDP-2-C-methyl-D-erythritol 2-phosphate is bound by residues 11–13 (DVH) and 40–41 (HS). An a divalent metal cation-binding site is contributed by H48. 4-CDP-2-C-methyl-D-erythritol 2-phosphate-binding positions include 62–64 (DIG), 67–71 (FPDTD), 137–140 (TTSE), F144, and R147.

It belongs to the IspF family. Homotrimer. Requires a divalent metal cation as cofactor.

The catalysed reaction is 4-CDP-2-C-methyl-D-erythritol 2-phosphate = 2-C-methyl-D-erythritol 2,4-cyclic diphosphate + CMP. Its pathway is isoprenoid biosynthesis; isopentenyl diphosphate biosynthesis via DXP pathway; isopentenyl diphosphate from 1-deoxy-D-xylulose 5-phosphate: step 4/6. Its function is as follows. Involved in the biosynthesis of isopentenyl diphosphate (IPP) and dimethylallyl diphosphate (DMAPP), two major building blocks of isoprenoid compounds. Catalyzes the conversion of 4-diphosphocytidyl-2-C-methyl-D-erythritol 2-phosphate (CDP-ME2P) to 2-C-methyl-D-erythritol 2,4-cyclodiphosphate (ME-CPP) with a corresponding release of cytidine 5-monophosphate (CMP). The polypeptide is 2-C-methyl-D-erythritol 2,4-cyclodiphosphate synthase (Rubrobacter xylanophilus (strain DSM 9941 / JCM 11954 / NBRC 16129 / PRD-1)).